Consider the following 216-residue polypeptide: Uracil-DNA glycosylase (216 aa).

Asp-60 serves as the catalytic Proton acceptor.

This sequence belongs to the uracil-DNA glycosylase (UDG) superfamily. UNG family.

It is found in the cytoplasm. The enzyme catalyses Hydrolyzes single-stranded DNA or mismatched double-stranded DNA and polynucleotides, releasing free uracil.. Functionally, excises uracil residues from the DNA which can arise as a result of misincorporation of dUMP residues by DNA polymerase or due to deamination of cytosine. The polypeptide is Uracil-DNA glycosylase (Psychromonas ingrahamii (strain DSM 17664 / CCUG 51855 / 37)).